We begin with the raw amino-acid sequence, 275 residues long: MINQGIKAALNPIAFQGGPFTIHWYGVIIASGVVLALLLAVREGKREGIPEDDFYDYLLWALPIAIICARIYYVVFQWSYYSQHPSEIIAIWDGGIAIYGAILGGFIVLLVFCHYRHLSSWLMMDIIAPTLIMAQGIGRWGNFMNQEAFGDITTRAHLMAQHIPNWIINQMYIGGHYRIPTFLYESLWDLTGFALLMLLRHRKHLFRRGEIFLTYVMWYAFGRFFIEGMRTDSLMLGSIRISQLLSIVFFVSALIILIIRRHKNIPWYYNGINKN.

Helical transmembrane passes span 20–40, 58–78, 88–108, and 118–138; these read FTIH…LLLA, LLWA…VFQW, IIAI…GFIV, and LSSW…QGIG. Arg139 lines the a 1,2-diacyl-sn-glycero-3-phospho-(1'-sn-glycerol) pocket. Transmembrane regions (helical) follow at residues 209-229 and 239-259; these read GEIF…IEGM and IRIS…ILII.

It belongs to the Lgt family.

The protein localises to the cell membrane. It carries out the reaction L-cysteinyl-[prolipoprotein] + a 1,2-diacyl-sn-glycero-3-phospho-(1'-sn-glycerol) = an S-1,2-diacyl-sn-glyceryl-L-cysteinyl-[prolipoprotein] + sn-glycerol 1-phosphate + H(+). Its pathway is protein modification; lipoprotein biosynthesis (diacylglyceryl transfer). Catalyzes the transfer of the diacylglyceryl group from phosphatidylglycerol to the sulfhydryl group of the N-terminal cysteine of a prolipoprotein, the first step in the formation of mature lipoproteins. The polypeptide is Phosphatidylglycerol--prolipoprotein diacylglyceryl transferase (Limosilactobacillus reuteri (strain DSM 20016) (Lactobacillus reuteri)).